The following is a 235-amino-acid chain: AA9 family lytic polysaccharide monooxygenase D (235 aa).

The signal sequence occupies residues 1 to 18 (MKAFFAVLAVVSAPFVLG). His19 contacts Cu(2+). A glycan (O-linked (Man...) serine) is linked at Ser29. A disulfide bridge connects residues Cys61 and Cys181. His94 is a Cu(2+) binding site. 2 residues coordinate O2: His167 and Gln176. Tyr178 contributes to the Cu(2+) binding site. Asn221 is a glycosylation site (N-linked (GlcNAc...) asparagine).

The protein belongs to the polysaccharide monooxygenase AA9 family. Cu(2+) is required as a cofactor.

The protein resides in the secreted. It carries out the reaction [(1-&gt;4)-beta-D-glucosyl]n+m + reduced acceptor + O2 = 4-dehydro-beta-D-glucosyl-[(1-&gt;4)-beta-D-glucosyl]n-1 + [(1-&gt;4)-beta-D-glucosyl]m + acceptor + H2O.. In terms of biological role, lytic polysaccharide monooxygenase (LPMO) that depolymerizes crystalline and amorphous polysaccharides via the oxidation of scissile alpha- or beta-(1-4)-glycosidic bonds, yielding only C1 oxidation products. Catalysis by LPMOs requires the reduction of the active-site copper from Cu(II) to Cu(I) by a reducing agent and H(2)O(2) or O(2) as a cosubstrate. This chain is AA9 family lytic polysaccharide monooxygenase D, found in Phanerodontia chrysosporium (White-rot fungus).